Here is a 447-residue protein sequence, read N- to C-terminus: Cysteine--tRNA ligase (447 aa).

Cys28 contacts Zn(2+). The 'HIGH' region signature appears at 30–40 (PTVYNYIHIGN). Zn(2+) contacts are provided by Cys211, His236, and Glu240. Residues 268–272 (KMSKS) carry the 'KMSKS' region motif. Lys271 provides a ligand contact to ATP.

This sequence belongs to the class-I aminoacyl-tRNA synthetase family. In terms of assembly, monomer. Zn(2+) is required as a cofactor.

The protein resides in the cytoplasm. It carries out the reaction tRNA(Cys) + L-cysteine + ATP = L-cysteinyl-tRNA(Cys) + AMP + diphosphate. The protein is Cysteine--tRNA ligase of Streptococcus pyogenes serotype M3 (strain ATCC BAA-595 / MGAS315).